We begin with the raw amino-acid sequence, 376 residues long: Succinyl-diaminopimelate desuccinylase (376 aa).

His-67 contacts Zn(2+). The active site involves Asp-69. Residue Asp-100 participates in Zn(2+) binding. Glu-134 functions as the Proton acceptor in the catalytic mechanism. Zn(2+)-binding residues include Glu-135, Glu-163, and His-349.

This sequence belongs to the peptidase M20A family. DapE subfamily. Homodimer. The cofactor is Zn(2+). Requires Co(2+) as cofactor.

It carries out the reaction N-succinyl-(2S,6S)-2,6-diaminopimelate + H2O = (2S,6S)-2,6-diaminopimelate + succinate. Its pathway is amino-acid biosynthesis; L-lysine biosynthesis via DAP pathway; LL-2,6-diaminopimelate from (S)-tetrahydrodipicolinate (succinylase route): step 3/3. In terms of biological role, catalyzes the hydrolysis of N-succinyl-L,L-diaminopimelic acid (SDAP), forming succinate and LL-2,6-diaminopimelate (DAP), an intermediate involved in the bacterial biosynthesis of lysine and meso-diaminopimelic acid, an essential component of bacterial cell walls. This chain is Succinyl-diaminopimelate desuccinylase, found in Pseudoalteromonas atlantica (strain T6c / ATCC BAA-1087).